A 308-amino-acid polypeptide reads, in one-letter code: Homeobox protein abdominal-A homolog (308 aa).

Residues 138–197 (RRRGRQTYTRFQTLELEKEFHFNHYLTRRRRIEIAHALCLTERQIKIWFQNRRMKLKKEL) constitute a DNA-binding region (homeobox). The segment covering 207–221 (ARREREEQDKMKNES) has biased composition (basic and acidic residues). A disordered region spans residues 207 to 277 (ARREREEQDK…SGNLGSHLHH (71 aa)). A compositionally biased stretch (low complexity) spans 223–247 (KSAQQHHSQKQAQQEHTVVGSQQTS). A compositionally biased stretch (gly residues) spans 248–269 (NGGGTGGGTGGSGGAGSGGSSG).

It belongs to the Antp homeobox family.

Its subcellular location is the nucleus. Sequence-specific transcription factor which is part of a developmental regulatory system that provides cells with specific positional identities on the anterior-posterior axis. This chain is Homeobox protein abdominal-A homolog, found in Anopheles gambiae (African malaria mosquito).